Consider the following 437-residue polypeptide: GTPase Der (437 aa).

2 consecutive EngA-type G domains span residues 3–167 and 176–352; these read NIVA…TKKV and PAIA…DIRQ. Residues 9 to 16, 56 to 60, 119 to 122, 182 to 189, 229 to 233, and 294 to 297 contribute to the GTP site; these read GRPNVGKS, DTGGW, NKAD, GKPNVGKS, DTAGI, and NKWD. One can recognise a KH-like domain in the interval 353–437; the sequence is IKIPTSQLNR…TPINIFMREK (85 aa).

It belongs to the TRAFAC class TrmE-Era-EngA-EngB-Septin-like GTPase superfamily. EngA (Der) GTPase family. Associates with the 50S ribosomal subunit.

In terms of biological role, GTPase that plays an essential role in the late steps of ribosome biogenesis. This is GTPase Der from Azobacteroides pseudotrichonymphae genomovar. CFP2.